Here is a 236-residue protein sequence, read N- to C-terminus: Phosphoribosylaminoimidazole-succinocarboxamide synthase (236 aa).

This sequence belongs to the SAICAR synthetase family.

The catalysed reaction is 5-amino-1-(5-phospho-D-ribosyl)imidazole-4-carboxylate + L-aspartate + ATP = (2S)-2-[5-amino-1-(5-phospho-beta-D-ribosyl)imidazole-4-carboxamido]succinate + ADP + phosphate + 2 H(+). It functions in the pathway purine metabolism; IMP biosynthesis via de novo pathway; 5-amino-1-(5-phospho-D-ribosyl)imidazole-4-carboxamide from 5-amino-1-(5-phospho-D-ribosyl)imidazole-4-carboxylate: step 1/2. This chain is Phosphoribosylaminoimidazole-succinocarboxamide synthase (purC), found in Lactococcus lactis subsp. lactis (strain IL1403) (Streptococcus lactis).